Consider the following 156-residue polypeptide: Small ribosomal subunit protein uS7 (156 aa).

It belongs to the universal ribosomal protein uS7 family. As to quaternary structure, part of the 30S ribosomal subunit. Contacts proteins S9 and S11.

Its function is as follows. One of the primary rRNA binding proteins, it binds directly to 16S rRNA where it nucleates assembly of the head domain of the 30S subunit. Is located at the subunit interface close to the decoding center, probably blocks exit of the E-site tRNA. The polypeptide is Small ribosomal subunit protein uS7 (Campylobacter concisus (strain 13826)).